We begin with the raw amino-acid sequence, 361 residues long: Cyclin-D3-3 (361 aa).

This sequence belongs to the cyclin family. Cyclin D subfamily.

Functionally, promotes divisions in the guard cells (GCs) after the guard mother cells (GMC) symmetric division. The polypeptide is Cyclin-D3-3 (CYCD3-3) (Arabidopsis thaliana (Mouse-ear cress)).